The sequence spans 139 residues: Transcription antitermination protein NusB (139 aa).

This sequence belongs to the NusB family.

Its function is as follows. Involved in transcription antitermination. Required for transcription of ribosomal RNA (rRNA) genes. Binds specifically to the boxA antiterminator sequence of the ribosomal RNA (rrn) operons. In Salmonella agona (strain SL483), this protein is Transcription antitermination protein NusB.